A 461-amino-acid polypeptide reads, in one-letter code: Argininosuccinate lyase (461 aa).

This sequence belongs to the lyase 1 family. Argininosuccinate lyase subfamily.

The protein resides in the cytoplasm. The enzyme catalyses 2-(N(omega)-L-arginino)succinate = fumarate + L-arginine. The protein operates within amino-acid biosynthesis; L-arginine biosynthesis; L-arginine from L-ornithine and carbamoyl phosphate: step 3/3. This chain is Argininosuccinate lyase, found in Syntrophotalea carbinolica (strain DSM 2380 / NBRC 103641 / GraBd1) (Pelobacter carbinolicus).